The sequence spans 118 residues: Large ribosomal subunit protein uL23c (118 aa).

This sequence belongs to the universal ribosomal protein uL23 family. Part of the 50S ribosomal subunit.

Its subcellular location is the plastid. The protein resides in the chloroplast. In terms of biological role, binds to 23S rRNA. This is Large ribosomal subunit protein uL23c (rpl23) from Stigeoclonium helveticum (Green alga).